We begin with the raw amino-acid sequence, 252 residues long: Phosphate import ATP-binding protein PstB 1 (252 aa).

The ABC transporter domain occupies 6-247 (LQVSDLSVYY…PKHKETEDYI (242 aa)). Residue 38-45 (GPSGSGKS) coordinates ATP.

The protein belongs to the ABC transporter superfamily. Phosphate importer (TC 3.A.1.7) family. In terms of assembly, the complex is composed of two ATP-binding proteins (PstB), two transmembrane proteins (PstC and PstA) and a solute-binding protein (PstS).

The protein resides in the cell membrane. The enzyme catalyses phosphate(out) + ATP + H2O = ADP + 2 phosphate(in) + H(+). Functionally, part of the ABC transporter complex PstSACB involved in phosphate import. Responsible for energy coupling to the transport system. The polypeptide is Phosphate import ATP-binding protein PstB 1 (Streptococcus agalactiae serotype Ia (strain ATCC 27591 / A909 / CDC SS700)).